Here is a 72-residue protein sequence, read N- to C-terminus: Disintegrin cotiarin (72 aa).

The 72-residue stretch at 1-72 folds into the Disintegrin domain; it reads EAGEECDCGA…SADCPRNRFH (72 aa). Intrachain disulfides connect C6–C21, C8–C16, C15–C38, C29–C35, C34–C59, and C47–C66. A Cell attachment site motif is present at residues 51 to 53; sequence RGD. A disordered region spans residues 51-72; it reads RGDNPDDRCTGQSADCPRNRFH.

The protein belongs to the venom metalloproteinase (M12B) family. P-II subfamily. P-IIa sub-subfamily. As to quaternary structure, monomer. As to expression, expressed by the venom gland.

The protein localises to the secreted. Functionally, inhibits fibrinogen interaction with platelets. Acts by binding to alpha-IIb/beta-3 (ITGA2B/ITGB3) on the platelet surface and inhibits aggregation induced by ADP, thrombin, platelet-activating factor and collagen. The chain is Disintegrin cotiarin from Bothrops cotiara (Cotiara).